Here is a 710-residue protein sequence, read N- to C-terminus: Zinc finger and BTB domain-containing protein 24 (710 aa).

In terms of domain architecture, BTB spans 37-103; that stretch reads CDITLIVENV…IYTGYLHASE (67 aa). Disordered regions lie at residues 134 to 176 and 202 to 256; these read APKP…EGRS and EEDS…SRRR. Residues 159-171 constitute a DNA-binding region (a.T hook); sequence KRKRGRPRKANGL. Basic and acidic residues-rich tracts occupy residues 202 to 219 and 231 to 244; these read EEDS…KESE and PAEK…KAGD. 8 consecutive C2H2-type zinc fingers follow at residues 293 to 315, 321 to 343, 349 to 371, 377 to 399, 405 to 427, 433 to 455, 461 to 483, and 489 to 511; these read ARCK…QRRH, FKCN…TRMH, YTCT…MSLH, FTCD…YRVH, PECS…LRTH, FTCE…IRIH, YSCS…CILH, and FSCP…LKIH. The interval 651–676 is disordered; it reads EQTTSSVPAADTGARATPVPSTRPGA.

This sequence belongs to the krueppel C2H2-type zinc-finger protein family. As to quaternary structure, interacts with MN1. Widely expressed. Highest level in liver, testis and kidney.

The protein localises to the nucleus. Functionally, may be involved in BMP2-induced transcription. The polypeptide is Zinc finger and BTB domain-containing protein 24 (Zbtb24) (Mus musculus (Mouse)).